The chain runs to 106 residues: MEYLIPGEIITEDGDIELNSGKNAKTLTVSNTGDRPIQVGSHYHFFETNKALIFTREITLGMRLDIPAGTAIRFEPGDTTEVKLIPYSGYRNAFGFNALINGPLDS.

This sequence belongs to the urease beta subunit family. As to quaternary structure, heterotrimer of UreA (gamma), UreB (beta) and UreC (alpha) subunits. Three heterotrimers associate to form the active enzyme.

Its subcellular location is the cytoplasm. It catalyses the reaction urea + 2 H2O + H(+) = hydrogencarbonate + 2 NH4(+). It participates in nitrogen metabolism; urea degradation; CO(2) and NH(3) from urea (urease route): step 1/1. The polypeptide is Urease subunit beta (Prochlorococcus marinus subsp. pastoris (strain CCMP1986 / NIES-2087 / MED4)).